A 352-amino-acid polypeptide reads, in one-letter code: Protein RecA (352 aa).

Residue glycine 66–threonine 73 participates in ATP binding.

Belongs to the RecA family.

Its subcellular location is the cytoplasm. Can catalyze the hydrolysis of ATP in the presence of single-stranded DNA, the ATP-dependent uptake of single-stranded DNA by duplex DNA, and the ATP-dependent hybridization of homologous single-stranded DNAs. It interacts with LexA causing its activation and leading to its autocatalytic cleavage. This chain is Protein RecA, found in Psychrobacter arcticus (strain DSM 17307 / VKM B-2377 / 273-4).